A 235-amino-acid polypeptide reads, in one-letter code: Serine protease SplA (235 aa).

An N-terminal signal peptide occupies residues 1–35 (MNKNVMIKGLTALTILTSLGFAENISDQPHSIAKA). Catalysis depends on charge relay system residues His74, Asp113, and Ser189.

The protein belongs to the peptidase S1B family.

The protein localises to the secreted. This Staphylococcus aureus protein is Serine protease SplA (splA).